The following is a 100-amino-acid chain: Urease subunit gamma (100 aa).

Belongs to the urease gamma subunit family. As to quaternary structure, heterotrimer of UreA (gamma), UreB (beta) and UreC (alpha) subunits. Three heterotrimers associate to form the active enzyme.

The protein resides in the cytoplasm. The enzyme catalyses urea + 2 H2O + H(+) = hydrogencarbonate + 2 NH4(+). It participates in nitrogen metabolism; urea degradation; CO(2) and NH(3) from urea (urease route): step 1/1. This chain is Urease subunit gamma, found in Synechococcus sp. (strain CC9902).